The sequence spans 234 residues: Phosphoglycolate phosphatase (234 aa).

D13 (nucleophile) is an active-site residue. The Mg(2+) site is built by D13, D15, and D175.

This sequence belongs to the HAD-like hydrolase superfamily. CbbY/CbbZ/Gph/YieH family. As to quaternary structure, monomer. Mg(2+) is required as a cofactor. Requires chloride as cofactor.

The catalysed reaction is 2-phosphoglycolate + H2O = glycolate + phosphate. It participates in organic acid metabolism; glycolate biosynthesis; glycolate from 2-phosphoglycolate: step 1/1. Specifically catalyzes the dephosphorylation of 2-phosphoglycolate. Is involved in the dissimilation of the intracellular 2-phosphoglycolate formed during the DNA repair of 3'-phosphoglycolate ends, a major class of DNA lesions induced by oxidative stress. The polypeptide is Phosphoglycolate phosphatase (Pectobacterium atrosepticum (strain SCRI 1043 / ATCC BAA-672) (Erwinia carotovora subsp. atroseptica)).